The sequence spans 273 residues: Putative ABC transporter ATP-binding protein DVU_1056 (273 aa).

The ABC transporter domain maps to 10 to 242 (LSLDDIHFTY…IHHGGEVAHE (233 aa)). An ATP-binding site is contributed by 44–51 (GHNGSGKT). The interval 234 to 273 (HHGGEVAHEHPSRGCCHQHDGSHHHAGHDDDHPHTSQTTE) is disordered. Residues 235–267 (HGGEVAHEHPSRGCCHQHDGSHHHAGHDDDHPH) show a composition bias toward basic and acidic residues.

The protein belongs to the ABC transporter superfamily.

Its subcellular location is the cell inner membrane. In terms of biological role, probably part of an ABC transporter complex. Responsible for energy coupling to the transport system. The polypeptide is Putative ABC transporter ATP-binding protein DVU_1056 (Nitratidesulfovibrio vulgaris (strain ATCC 29579 / DSM 644 / CCUG 34227 / NCIMB 8303 / VKM B-1760 / Hildenborough) (Desulfovibrio vulgaris)).